A 252-amino-acid chain; its full sequence is Imidazole glycerol phosphate synthase subunit HisF (252 aa).

Catalysis depends on residues Asp13 and Asp132.

Belongs to the HisA/HisF family. Heterodimer of HisH and HisF.

It localises to the cytoplasm. It carries out the reaction 5-[(5-phospho-1-deoxy-D-ribulos-1-ylimino)methylamino]-1-(5-phospho-beta-D-ribosyl)imidazole-4-carboxamide + L-glutamine = D-erythro-1-(imidazol-4-yl)glycerol 3-phosphate + 5-amino-1-(5-phospho-beta-D-ribosyl)imidazole-4-carboxamide + L-glutamate + H(+). Its pathway is amino-acid biosynthesis; L-histidine biosynthesis; L-histidine from 5-phospho-alpha-D-ribose 1-diphosphate: step 5/9. Functionally, IGPS catalyzes the conversion of PRFAR and glutamine to IGP, AICAR and glutamate. The HisF subunit catalyzes the cyclization activity that produces IGP and AICAR from PRFAR using the ammonia provided by the HisH subunit. This Campylobacter curvus (strain 525.92) protein is Imidazole glycerol phosphate synthase subunit HisF.